The sequence spans 155 residues: 6,7-dimethyl-8-ribityllumazine synthase (155 aa).

Residues phenylalanine 23, 57–59 (AFE), and 81–83 (AVI) each bind 5-amino-6-(D-ribitylamino)uracil. 86–87 (ST) lines the (2S)-2-hydroxy-3-oxobutyl phosphate pocket. The active-site Proton donor is the histidine 89. Phenylalanine 114 is a 5-amino-6-(D-ribitylamino)uracil binding site. Residue arginine 128 participates in (2S)-2-hydroxy-3-oxobutyl phosphate binding.

The protein belongs to the DMRL synthase family.

The enzyme catalyses (2S)-2-hydroxy-3-oxobutyl phosphate + 5-amino-6-(D-ribitylamino)uracil = 6,7-dimethyl-8-(1-D-ribityl)lumazine + phosphate + 2 H2O + H(+). It participates in cofactor biosynthesis; riboflavin biosynthesis; riboflavin from 2-hydroxy-3-oxobutyl phosphate and 5-amino-6-(D-ribitylamino)uracil: step 1/2. Functionally, catalyzes the formation of 6,7-dimethyl-8-ribityllumazine by condensation of 5-amino-6-(D-ribitylamino)uracil with 3,4-dihydroxy-2-butanone 4-phosphate. This is the penultimate step in the biosynthesis of riboflavin. The polypeptide is 6,7-dimethyl-8-ribityllumazine synthase (Trichlorobacter lovleyi (strain ATCC BAA-1151 / DSM 17278 / SZ) (Geobacter lovleyi)).